We begin with the raw amino-acid sequence, 906 residues long: MSASTRNKHSKIHGNEKLDITTDEFDRIRQALSNEEFRKLFFDYVDEIQDPENRKLYEKEITQLEKERGVDVTFIHPQPGFVVKTSIDGELKCFINIASSTVVERPNNEVSVNSQTGQKGLSWSIPMAQTPPRDDLDANNKQCKVFDVVFHPDALHLGKRNAQFRQCLIDTALDGVEREYKVNLDRANLKFPKLDYKGLARPTVLRKLSKDATAEELEPHPLEHMYPKKPAANADQPKVLPMKTKVTPAPTFAVPKYSIKHSHDVDLAEYTDELDAKLQVTMPRALVVEIELPLLSSTADCQLDVTEKSVYLLSERQGAKYRLKLDLPYTVNDKAGNARFDTEHRRLCITLPVVRSTAREQRNLHDTVRVLTREDSGVELNSNGESPVEDEAEAEVEADAIVELQSHDQRDVSDAFPPTAVVSPRSFLKDNLHYKLPASFDCNILDNVIAFVLHVPNVQPDSVQTLQQARSLHLQFASMGSGYYPTHYAFLVQLPDGLEPQLQIDHIDVDAADENVVLRLYMNENCMLLPSYLAGPDSTDLKEYPVFGHFNNNNNNEKEYEGCSLASEKSLYINMDHNDLEHALEVSIMPQESTDPLDSIELLQQQQQQLQQLQQQKKLNKKQRKRNKKQRSLSESACEELKAAQEELQLQHEKQQQQQQLPSTPKDASPERLQNVSQPVDTLKLPQRKQRSYSECNESSSCVQRGILKRFSRYGPRPSISDSCSSIDDCSSTYSCSMDAPGMGFSQSFGGIPEERSGEGDVGLSESCKKTVRFNDHIMKQVFRLDSSILGQRKKNQKRRDCKLRAQQRRLSEGDSADYEEVEHGNGQQPPAHKTAANAQYFKQPNNNNGHDQDKNKKLSMHDSGLDLTNNNNHNNEEETKRNEADAKNAMMFEMDDDDEDEDEDM.

Serine 376 carries the post-translational modification Phosphoserine. 2 disordered regions span residues 614 to 691 (QQQK…RKQR) and 793 to 906 (RKKN…DEDM). Residues 618 to 631 (KLNKKQRKRNKKQR) are compositionally biased toward basic residues. A compositionally biased stretch (basic and acidic residues) spans 639–655 (EELKAAQEELQLQHEKQ). Positions 793-808 (RKKNQKRRDCKLRAQQ) are enriched in basic residues. Serine 812 bears the Phosphoserine mark. Residues 837–850 (ANAQYFKQPNNNNG) are compositionally biased toward polar residues. Composition is skewed to basic and acidic residues over residues 851-865 (HDQD…HDSG) and 875-887 (NNEE…EADA). A compositionally biased stretch (acidic residues) spans 894–906 (EMDDDDEDEDEDM).

The protein belongs to the PIH1 family. Kintoun subfamily. In terms of assembly, interacts with Pp1alpha-96A, Pp1-87B, Pp1-13C and flw.

The protein localises to the cytoplasm. In terms of biological role, required for cytoplasmic pre-assembly of axonemal dyneins, thereby playing a central role in motility in cilia and flagella. Involved in pre-assembly of dynein arm complexes in the cytoplasm before intraflagellar transport loads them for the ciliary compartment. The chain is Protein kintoun from Drosophila virilis (Fruit fly).